A 173-amino-acid polypeptide reads, in one-letter code: Transcription factor S-II-related protein (173 aa).

Residues Ile9–Val129 form the TFIIS central domain. A TFIIS-type zinc finger spans residues Glu130–Lys170. Zn(2+)-binding residues include Cys134, Cys137, Cys162, and Cys165.

This sequence belongs to the TFS-II family.

The polypeptide is Transcription factor S-II-related protein (Acanthamoeba polyphaga mimivirus (APMV)).